Here is a 1457-residue protein sequence, read N- to C-terminus: Bridge-like lipid transfer protein family member 3B (1457 aa).

The Chorein N-terminal domain occupies 3–94 (GIIKKQILKH…DKVIMEMSTC (92 aa)). Disordered regions lie at residues 267–295 (STEQRKSMAPEPTQSSTVTSSAQHVKTPQ) and 409–449 (DRNL…PQPS). Polar residues predominate over residues 278-295 (PTQSSTVTSSAQHVKTPQ). Residues Ser-414, Ser-418, Ser-774, and Ser-934 each carry the phosphoserine modification. Disordered regions lie at residues 975–1038 (SEDE…TGKG), 1056–1099 (ASLS…LSVS), and 1145–1183 (SNTSCQSPAESVNTSANTQTCGEASPEAVSTNSEGTQEN). The span at 980–995 (SGLSHKSGSGEMTSEG) shows a compositional bias: polar residues. Position 1008 is a phosphoserine (Ser-1008). A compositionally biased stretch (polar residues) spans 1145–1180 (SNTSCQSPAESVNTSANTQTCGEASPEAVSTNSEGT). Residues 1410-1455 (ANFLDITREQLMEENECLRQRLAQAKMELAEAHSARDELLHQMKRM) are a coiled coil.

Homodimer (via N-terminus). Associates with the Golgi-associated retrograde protein (GARP) complex. Interacts with GARP complex component VPS52. Interacts (via C-terminal coiled-coil domain) with STX6.

The protein localises to the cytoplasm. The protein resides in the cytosol. Its subcellular location is the early endosome. In terms of biological role, tube-forming lipid transport protein which mediates the transfer of lipids between membranes at organelle contact sites. Required for retrograde traffic of vesicle clusters in the early endocytic pathway to the Golgi complex. This is Bridge-like lipid transfer protein family member 3B (Bltp3b) from Mus musculus (Mouse).